The sequence spans 396 residues: S-adenosylmethionine synthase (396 aa).

His-14 contacts ATP. Asp-16 is a Mg(2+) binding site. Residue Glu-42 coordinates K(+). 2 residues coordinate L-methionine: Glu-55 and Gln-98. A flexible loop region spans residues Gln-98–Lys-108. ATP contacts are provided by residues Asp-174 to Lys-176, Arg-240 to Phe-241, Asp-249, Arg-255 to Lys-256, Ala-272, and Lys-276. Asp-249 contacts L-methionine. Residue Lys-280 participates in L-methionine binding.

It belongs to the AdoMet synthase family. As to quaternary structure, homotetramer; dimer of dimers. Mg(2+) is required as a cofactor. Requires K(+) as cofactor.

It is found in the cytoplasm. It catalyses the reaction L-methionine + ATP + H2O = S-adenosyl-L-methionine + phosphate + diphosphate. Its pathway is amino-acid biosynthesis; S-adenosyl-L-methionine biosynthesis; S-adenosyl-L-methionine from L-methionine: step 1/1. In terms of biological role, catalyzes the formation of S-adenosylmethionine (AdoMet) from methionine and ATP. The overall synthetic reaction is composed of two sequential steps, AdoMet formation and the subsequent tripolyphosphate hydrolysis which occurs prior to release of AdoMet from the enzyme. This chain is S-adenosylmethionine synthase, found in Caldicellulosiruptor saccharolyticus (strain ATCC 43494 / DSM 8903 / Tp8T 6331).